The following is a 348-amino-acid chain: Uroporphyrinogen decarboxylase (348 aa).

Substrate contacts are provided by residues 27 to 31 (RQAGR), Phe46, Asp76, Tyr152, Ser207, and His320.

Belongs to the uroporphyrinogen decarboxylase family. As to quaternary structure, homodimer.

The protein resides in the cytoplasm. The catalysed reaction is uroporphyrinogen III + 4 H(+) = coproporphyrinogen III + 4 CO2. The protein operates within porphyrin-containing compound metabolism; protoporphyrin-IX biosynthesis; coproporphyrinogen-III from 5-aminolevulinate: step 4/4. In terms of biological role, catalyzes the decarboxylation of four acetate groups of uroporphyrinogen-III to yield coproporphyrinogen-III. The protein is Uroporphyrinogen decarboxylase of Bacillus mycoides (strain KBAB4) (Bacillus weihenstephanensis).